A 370-amino-acid polypeptide reads, in one-letter code: Cyclin-A3-4 (370 aa).

It belongs to the cyclin family. Cyclin AB subfamily. Interacts with FZR2/CCS52A1, FZR1/CCS52A2 and FZR3/CCS52B.

This Arabidopsis thaliana (Mouse-ear cress) protein is Cyclin-A3-4 (CYCA3-4).